Reading from the N-terminus, the 84-residue chain is MKVTLTAILTCAAVLVLHTTAAEELEESQLMEVGMPDTELAAVDEERLFECSVSCEIEKEGNKGCKKKKCKGGWKCKFNMCVKV.

The N-terminal stretch at Met1–Ala22 is a signal peptide. The propeptide occupies Glu23–Arg47. 3 disulfides stabilise this stretch: Cys51–Cys65, Cys55–Cys76, and Cys70–Cys81.

Belongs to the neurotoxin 12 (Hwtx-2) family. 02 (Hwtx-2) subfamily. Expressed by the venom gland.

The protein resides in the secreted. Functionally, postsynaptic neurotoxin. This Cyriopagopus hainanus (Chinese bird spider) protein is U4-theraphotoxin-Hhn1b.